The following is a 475-amino-acid chain: FAD-dependent monooxygenase penE (475 aa).

Positions 35, 49, and 108 each coordinate FAD. Tyrosine 216 is an active-site residue. Aspartate 308 and alanine 321 together coordinate FAD. Asparagine 437 carries an N-linked (GlcNAc...) asparagine glycan. Residues tryptophan 446–proline 466 form a helical membrane-spanning segment.

The protein belongs to the paxM FAD-dependent monooxygenase family. Requires FAD as cofactor.

It is found in the membrane. The catalysed reaction is [(1'E)-3'-hydroxy-3',7'-dimethylocta-1',6'-dien-1'-yl]-quinolinone B + NADPH + O2 + H(+) = [(1'E)-5'-(3',3'-dimethyloxiran-2'-yl)-3'-hydroxy-3'-methylpent-1'-en-1'-yl]-quinolinone B + NADP(+) + H2O. It functions in the pathway secondary metabolite biosynthesis. It participates in alkaloid biosynthesis. Its pathway is mycotoxin biosynthesis. Its function is as follows. FAD-dependent monooxygenase; part of the gene cluster that mediates the biosynthesis of penigequinolones, potent insecticidal alkaloids that contain a highly modified 10-carbon prenyl group. The first stage is catalyzed by the nonribosomal peptide synthetase penN that condenses anthranilic acid and O-methyl-L-tyrosine to produce 4'-methoxycyclopeptin. 4'-methoxycyclopeptin is then converted to 4'-methoxydehydrocyclopeptin by the ketoglutarate-dependent dioxygenase penM through dehydrogenation to form a double bond between C-alpha and C-beta of the O-methyltyrosine side chain. PenM also converts its first product methoxydehydrocyclopeptin to 4'-methoxycyclopenin. The following conversion of 4'methoxycyclopenin into 4'-methoxyviridicatin is catalyzed by the cyclopenase penL. 4'-methoxyviridicatin is the precursor of quinolone natural products, and is further converted to quinolinone B. The prenyltransferase penI then catalyzes the canonical Friedel-Crafts alkylation of quinolinone B with dimethylallyl cation to yield dimethylallyl quinolone, which is subjected to FAD-dependent dehydrogenation by the FAD-linked oxidoreductase penH to yield conjugated aryl diene. The delta(3') double bond then serves as the site of the second alkylation with DMAPP catalyzed by the prenyltransferase penG to yield a carbenium ion intermediate, which can be attacked by H(2)O to yield a styrenyl quinolone containing a C3'-hydroxyprenyl chain, or undergo cyclization to yield yaequinolones J1 and J2. The conversion of the styrenyl quinolone into the tetrahydrofuran-containing yaequinolone C is performed by the FAD-dependent monooxygenase penE and involves epoxidation of the terminal C7'-C8' olefin, followed by epoxide ring opening initiated by the C3' hydroxyl group. The predicted cysteine hydrolase penJ acts as an epoxide hydrolase that enhances the rate of the 5-exo-tet cyclization step, increasing the yield of yaequinolone C. PenF catalyzes the cationic rearrangement of the epoxide formed by penE (before ring opening to produce yaequinolone C) into yaequinolone D. Finally, the short-chain dehydrogenase/reductase (SDR)-like reductase penD, catalyzes both the dehydration of yaequinolone D and the reduction of the resulting oxonium to yield penigequinolone. This is FAD-dependent monooxygenase penE from Penicillium thymicola.